The primary structure comprises 245 residues: Bis(5'-nucleosyl)-tetraphosphatase PrpE [asymmetrical] (245 aa).

Belongs to the PrpE family. Ni(2+) serves as cofactor.

The catalysed reaction is P(1),P(4)-bis(5'-guanosyl) tetraphosphate + H2O = GMP + GTP + 2 H(+). In terms of biological role, asymmetrically hydrolyzes Ap4p to yield AMP and ATP. The polypeptide is Bis(5'-nucleosyl)-tetraphosphatase PrpE [asymmetrical] (Geobacillus sp. (strain WCH70)).